Here is a 293-residue protein sequence, read N- to C-terminus: MFGFLNLNKPPDWTSHDCVAKVRKILKTKRVGHGGTLDPMATGVLPIAVGAATRLLAYLPENKAYRAKIQLGLSTDTDDITGKAIATCPWPDLTLEAVKPHLAEFIGNIAQIPPMYSAIHKDGRRLYELARKGEIIAVEPRQVKIDQITVLDWLEGEFPQIELDIHCGSGTYIRSLARDLGKVLAVGGTLASLTRTESCGFQLADSINLEALMVNSEGLISPRIALAHLDWISFTPERVIDWFHGRKINLTDTNVIIGSLVAVESLEAQFLGIGEIVVAEDEYYLQPKIVIQQ.

Aspartate 38 functions as the Nucleophile in the catalytic mechanism.

This sequence belongs to the pseudouridine synthase TruB family. Type 1 subfamily.

The enzyme catalyses uridine(55) in tRNA = pseudouridine(55) in tRNA. Its function is as follows. Responsible for synthesis of pseudouridine from uracil-55 in the psi GC loop of transfer RNAs. This chain is tRNA pseudouridine synthase B, found in Microcystis aeruginosa (strain NIES-843 / IAM M-2473).